The following is a 75-amino-acid chain: Exodeoxyribonuclease 7 small subunit (75 aa).

It belongs to the XseB family. As to quaternary structure, heterooligomer composed of large and small subunits.

The protein resides in the cytoplasm. The catalysed reaction is Exonucleolytic cleavage in either 5'- to 3'- or 3'- to 5'-direction to yield nucleoside 5'-phosphates.. Functionally, bidirectionally degrades single-stranded DNA into large acid-insoluble oligonucleotides, which are then degraded further into small acid-soluble oligonucleotides. This Chlamydia abortus (strain DSM 27085 / S26/3) (Chlamydophila abortus) protein is Exodeoxyribonuclease 7 small subunit.